Here is a 231-residue protein sequence, read N- to C-terminus: Extracellular deoxyribonuclease (231 aa).

Residues 1 to 20 form the signal peptide; sequence MMIFRFVTTLAASLPLLTFA.

The protein belongs to the EndA/NucM nuclease family.

The protein localises to the secreted. The protein is Extracellular deoxyribonuclease (dns) of Vibrio cholerae serotype O1 (strain ATCC 39315 / El Tor Inaba N16961).